A 974-amino-acid chain; its full sequence is Protein bicaudal C homolog 1 (974 aa).

The segment at 1–50 (MAAQGEPGYLAAQSDPGSNSERSTDSPVPGSEDDLVAGATLHSPEWSEER) is disordered. 3 positions are modified to phosphoserine: Ser-26, Ser-31, and Ser-43. 2 consecutive KH domains span residues 132–199 (RVTL…RVRI) and 284–348 (PVST…RQYL). N6-acetyllysine is present on Lys-398. A phosphoserine mark is found at Ser-576, Ser-612, and Ser-679. Disordered regions lie at residues 593-644 (VLSA…GDLK), 665-719 (GTKN…HLAP), and 783-846 (YKPT…KSTE). Residues 602–619 (SIQTSGSEQTSPKSSPTE) show a composition bias toward polar residues. Basic and acidic residues predominate over residues 690-703 (LADKKAPGSERAAE). Positions 873–936 (FKGSDLPELF…LLAISELNKN (64 aa)) constitute an SAM domain.

It belongs to the BicC family. In terms of assembly, interacts (via KH domains) with ANKS6 (via SAM domain) in an RNA-dependent manner. Interacts with ANKS3.

It is found in the cytoplasm. In terms of biological role, putative RNA-binding protein. Acts as a negative regulator of Wnt signaling. May be involved in regulating gene expression during embryonic development. In Homo sapiens (Human), this protein is Protein bicaudal C homolog 1 (BICC1).